Here is a 170-residue protein sequence, read N- to C-terminus: Acireductone dioxygenase (170 aa).

4 residues coordinate Fe(2+): His-99, His-101, Glu-105, and His-144. His-99, His-101, Glu-105, and His-144 together coordinate Ni(2+).

Belongs to the acireductone dioxygenase (ARD) family. As to quaternary structure, monomer. The cofactor is Fe(2+). Requires Ni(2+) as cofactor.

The enzyme catalyses 1,2-dihydroxy-5-(methylsulfanyl)pent-1-en-3-one + O2 = 3-(methylsulfanyl)propanoate + CO + formate + 2 H(+). It carries out the reaction 1,2-dihydroxy-5-(methylsulfanyl)pent-1-en-3-one + O2 = 4-methylsulfanyl-2-oxobutanoate + formate + 2 H(+). Its pathway is amino-acid biosynthesis; L-methionine biosynthesis via salvage pathway; L-methionine from S-methyl-5-thio-alpha-D-ribose 1-phosphate: step 5/6. Its function is as follows. Catalyzes 2 different reactions between oxygen and the acireductone 1,2-dihydroxy-3-keto-5-methylthiopentene (DHK-MTPene) depending upon the metal bound in the active site. Fe-containing acireductone dioxygenase (Fe-ARD) produces formate and 2-keto-4-methylthiobutyrate (KMTB), the alpha-ketoacid precursor of methionine in the methionine recycle pathway. Ni-containing acireductone dioxygenase (Ni-ARD) produces methylthiopropionate, carbon monoxide and formate, and does not lie on the methionine recycle pathway. This is Acireductone dioxygenase from Bacillus cytotoxicus (strain DSM 22905 / CIP 110041 / 391-98 / NVH 391-98).